Consider the following 201-residue polypeptide: Protein FAR-RED-ELONGATED HYPOCOTYL 1-LIKE (201 aa).

The Nuclear localization sequence (NLS) signature appears at Lys-32–Lys-35. A Nuclear export sequence (NES) motif is present at residues Leu-43–Leu-46.

The protein belongs to the FHY1 protein family. Homodimer and heterodimer with FHY1. Interacts with PHYA, especially upon far-red (FR) light illumination. Binds to LAF1 and HFR1. Post-translationally, inactivated by rapid reversible PHYA-mediated phosphorylation.

The protein localises to the nucleus. It localises to the cytoplasm. Its function is as follows. Can activate transcription. Essential for light-regulated PHYA nuclear accumulation and subsequent PHYA phototropic signaling processes. PHYA-specific signal transducer in response to continuous FR lights. Mediates the association of PHYA with HFR1 and LAF1 in the nucleus in response to FR conditions. Contributes to inhibition of hypocotyl elongation in continuous blue light (B). In Arabidopsis thaliana (Mouse-ear cress), this protein is Protein FAR-RED-ELONGATED HYPOCOTYL 1-LIKE.